A 304-amino-acid polypeptide reads, in one-letter code: Acetylglutamate kinase (304 aa).

Substrate-binding positions include 75 to 76, Arg-97, and Asn-196; that span reads GG.

This sequence belongs to the acetylglutamate kinase family. ArgB subfamily.

Its subcellular location is the cytoplasm. The catalysed reaction is N-acetyl-L-glutamate + ATP = N-acetyl-L-glutamyl 5-phosphate + ADP. It participates in amino-acid biosynthesis; L-arginine biosynthesis; N(2)-acetyl-L-ornithine from L-glutamate: step 2/4. Catalyzes the ATP-dependent phosphorylation of N-acetyl-L-glutamate. The polypeptide is Acetylglutamate kinase (Corynebacterium urealyticum (strain ATCC 43042 / DSM 7109)).